A 376-amino-acid polypeptide reads, in one-letter code: WW domain-binding protein 4 (376 aa).

The Matrin-type zinc-finger motif lies at 11 to 42 (KFCDYCKCWIADNRPSVEFHERGKNHKENVAK). Over residues 94 to 107 (ITPVTSTIPPTSTS) the composition is skewed to low complexity. 3 disordered regions span residues 94-128 (ITPV…KGRW), 189-335 (SRWE…EPKV), and 356-376 (FKKR…GDDQ). WW domains follow at residues 122-155 (DPSK…KPEG) and 163-196 (TAVK…KPDD). A compositionally biased stretch (basic and acidic residues) spans 189-198 (SRWEKPDDFI). Polar residues predominate over residues 203-215 (DLPSSKVNENSLG). Composition is skewed to basic and acidic residues over residues 218 to 229 (DESKSSDSHSDS) and 243 to 257 (ETEK…KNKN). A phosphoserine mark is found at Ser220, Ser227, and Ser229. Ser262 carries the post-translational modification Phosphoserine. A compositionally biased stretch (basic and acidic residues) spans 298–309 (QEIKQEVESHEE). Over residues 316–326 (STENEYVSTSE) the composition is skewed to polar residues. Residues 357-375 (KKRRTENGKSRNLRQRGDD) are interaction with SNRNP200. A compositionally biased stretch (basic and acidic residues) spans 361 to 376 (TENGKSRNLRQRGDDQ).

As to quaternary structure, component of the spliceosome B complex. Associated with U2 snRNPs. Binds splicing factors SNRPB, SNRPC and SF1. Interacts via the WW domains with the Pro-rich domains of KHDRBS1/SAM68. Interacts via the WW domains with the Pro-rich domains of WBP11. Interacts with SNRNP200.

The protein resides in the nucleus. The protein localises to the nucleus speckle. Involved in pre-mRNA splicing as a component of the spliceosome. May play a role in cross-intron bridging of U1 and U2 snRNPs in the mammalian A complex. This Homo sapiens (Human) protein is WW domain-binding protein 4 (WBP4).